Consider the following 303-residue polypeptide: UDP-3-O-acyl-N-acetylglucosamine deacetylase (303 aa).

3 residues coordinate Zn(2+): His-78, His-237, and Asp-241. Residue His-264 is the Proton donor of the active site.

The protein belongs to the LpxC family. Zn(2+) serves as cofactor.

It carries out the reaction a UDP-3-O-[(3R)-3-hydroxyacyl]-N-acetyl-alpha-D-glucosamine + H2O = a UDP-3-O-[(3R)-3-hydroxyacyl]-alpha-D-glucosamine + acetate. It participates in glycolipid biosynthesis; lipid IV(A) biosynthesis; lipid IV(A) from (3R)-3-hydroxytetradecanoyl-[acyl-carrier-protein] and UDP-N-acetyl-alpha-D-glucosamine: step 2/6. Functionally, catalyzes the hydrolysis of UDP-3-O-myristoyl-N-acetylglucosamine to form UDP-3-O-myristoylglucosamine and acetate, the committed step in lipid A biosynthesis. This Pseudomonas syringae pv. tomato (strain ATCC BAA-871 / DC3000) protein is UDP-3-O-acyl-N-acetylglucosamine deacetylase.